The primary structure comprises 429 residues: Cell wall protein ECM33 (429 aa).

Positions 1–19 are cleaved as a signal peptide; the sequence is MQFKNALTATAILSASALA. N-linked (GlcNAc...) asparagine glycans are attached at residues Asn-21, Asn-56, Asn-82, Asn-196, Asn-209, Asn-227, Asn-234, Asn-241, Asn-267, Asn-279, Asn-304, and Asn-328. Ser-339 carries the phosphoserine modification. A compositionally biased stretch (low complexity) spans 361–401; the sequence is LSSTSTESSKSSATSSASSSGDASNAQANVSASASSSSSSS. The interval 361–410 is disordered; sequence LSSTSTESSKSSATSSASSSGDASNAQANVSASASSSSSSSKKSKGAAPE. An N-linked (GlcNAc...) asparagine glycan is attached at Asn-389. Residue Gly-406 is the site of GPI-anchor amidated glycine attachment. Residues 407–429 constitute a propeptide, removed in mature form; it reads AAPELVPATSFMGVVAAVGVALL.

This sequence belongs to the SPS2 family. In terms of processing, the GPI-anchor is attached to the protein in the endoplasmic reticulum and serves to target the protein to the cell surface. There, the glucosamine-inositol phospholipid moiety is cleaved off and the GPI-modified mannoprotein is covalently attached via its lipidless GPI glycan remnant to the 1,6-beta-glucan of the outer cell wall layer. Extensively N-glycosylated.

It localises to the cell membrane. Its subcellular location is the secreted. It is found in the cell wall. In terms of biological role, required for proper cell wall integrity and for the correct assembly of the mannoprotein outer layer of the cell wall. Important for apical bud growth. The sequence is that of Cell wall protein ECM33 (ECM33) from Saccharomyces cerevisiae (strain ATCC 204508 / S288c) (Baker's yeast).